The primary structure comprises 570 residues: Frizzled-2 (570 aa).

A signal peptide spans 1–28; it reads MRARSALPRSALPRLLLPLLLLPAAGPA. At 29–252 the chain is on the extracellular side; that stretch reads QFHGEKGISI…QEETRFARLW (224 aa). Residues 39 to 158 form the FZ domain; it reads PDHGFCQPIS…HGAEQICVGQ (120 aa). Disulfide bonds link C44-C105, C52-C98, C89-C126, C115-C155, and C119-C143. N-linked (GlcNAc...) asparagine glycosylation occurs at N58. The N-linked (GlcNAc...) asparagine glycan is linked to N159. The segment at 166–194 is disordered; that stretch reads PALLTTAPPSGLQPGAGGTPGGPGGGGSP. Positions 179-193 are enriched in gly residues; it reads PGAGGTPGGPGGGGS. Residues 253–273 form a helical membrane-spanning segment; the sequence is ILTWSVLCCASTFFTVTTYLV. At 274-284 the chain is on the cytoplasmic side; sequence DMQRFRYPERP. The helical transmembrane segment at 285–305 threads the bilayer; that stretch reads IIFLSGCYTMVSVAYIAGFVL. Over 306–332 the chain is Extracellular; sequence QERVVCNERFSEDGYRTVVQGTKKEGC. A helical membrane pass occupies residues 333 to 353; sequence TILFMMLYFFSMASSIWWVIL. Topologically, residues 354 to 375 are cytoplasmic; that stretch reads SLTWFLAAGMKWGHEAIEANSQ. Residues 376–396 traverse the membrane as a helical segment; the sequence is YFHLAAWAVPAVKTITILAMG. Over 397-419 the chain is Extracellular; it reads QIDGDLLSGVCFVGLNSLDPLRG. Residues 420 to 440 traverse the membrane as a helical segment; sequence FVLAPLFVYLFIGTSFLLAGF. Residues 441–466 are Cytoplasmic-facing; it reads VSLFRIRTIMKHDGTKTEKLERLMVR. A helical transmembrane segment spans residues 467 to 487; the sequence is IGVFSVLYTVPATIVIACYFY. The Extracellular portion of the chain corresponds to 488-524; it reads EQAFREHWERSWVSQHCKSLAIPCPAHYTPRMSPDFT. The helical transmembrane segment at 525–545 threads the bilayer; sequence VYMIKYLMTLIVGITSGFWIW. Over 546–570 the chain is Cytoplasmic; it reads SGKTLHSWRKFYTRLTNSRHGETTV. The Lys-Thr-X-X-X-Trp motif, mediates interaction with the PDZ domain of Dvl family members signature appears at 548–553; sequence KTLHSW. Residues 568–570 carry the PDZ-binding motif; sequence TTV.

This sequence belongs to the G-protein coupled receptor Fz/Smo family. Ubiquitinated by ZNRF3, leading to its degradation by the proteasome. Expressed in embryonic and adult heart, lung, chondrocytes and brain. Also expressed in the developing gastrointestinal tract (strongest in foregut), much weaker expression in the adult. No expression in fetal liver and adult spleen. Up-regulated in esophageal squamous cell carcinomas.

It is found in the membrane. It localises to the cell membrane. Functionally, receptor for Wnt proteins. Most of frizzled receptors are coupled to the beta-catenin canonical signaling pathway, which leads to the activation of disheveled proteins, inhibition of GSK-3 kinase, nuclear accumulation of beta-catenin and activation of Wnt target genes. A second signaling pathway involving PKC and calcium fluxes has been seen for some family members, but it is not yet clear if it represents a distinct pathway or if it can be integrated in the canonical pathway, as PKC seems to be required for Wnt-mediated inactivation of GSK-3 kinase. Both pathways seem to involve interactions with G-proteins. May be involved in transduction and intercellular transmission of polarity information during tissue morphogenesis and/or in differentiated tissues. This Mus musculus (Mouse) protein is Frizzled-2 (Fzd2).